The sequence spans 194 residues: Factor in the germline alpha (194 aa).

In terms of domain architecture, bHLH spans 59-111 (ERRRVANAKERERIKNLNRGFAKLKALVPFLPQSRKPSKVDILKGATEYIQIL). Residues 121–137 (SEKQSPEEQTHSGRPSD) are compositionally biased toward basic and acidic residues. Residues 121 to 163 (SEKQSPEEQTHSGRPSDPHVSSTRELLGNATQPTSCASGLKKE) are disordered. The span at 139-157 (HVSSTRELLGNATQPTSCA) shows a compositional bias: polar residues.

Heterodimer with TCF3/isoform E12. As to expression, expressed only in the oocytes within the ovary and at lower level in the testis. Found in the resting oocytes of the primordial follicle cells, at the periphery of the ovary and in the hilar region. Also detected in growing oocytes, but at lower levels.

The protein resides in the nucleus. Germ-line specific transcription factor implicated in postnatal oocyte-specific gene expression. Plays a key regulatory role in the expression of multiple oocyte-specific genes, including those that initiate folliculogenesis and those that encode the zona pellucida (ZP1, ZP2 and ZP3) required for fertilization and early embryonic survival. Essential for oocytes to survive and form primordial follicles. The persistence of FIGLA in adult females suggests that it may regulate additional pathways that are essential for normal ovarian development. Binds to the E-box (5'-CANNTG-3') of the ZPs (ZP1, ZP2, ZP3) promoters. This Mus musculus (Mouse) protein is Factor in the germline alpha (Figla).